Reading from the N-terminus, the 286-residue chain is Pantothenate synthetase (286 aa).

Position 30-37 (30-37) interacts with ATP; the sequence is MGFLHEGH. Catalysis depends on His37, which acts as the Proton donor. A (R)-pantoate-binding site is contributed by Gln61. Gln61 provides a ligand contact to beta-alanine. Position 147-150 (147-150) interacts with ATP; the sequence is GLKD. Residue Gln153 participates in (R)-pantoate binding. ATP contacts are provided by residues Val176 and 184 to 187; that span reads KSSR.

It belongs to the pantothenate synthetase family. Homodimer.

It localises to the cytoplasm. The enzyme catalyses (R)-pantoate + beta-alanine + ATP = (R)-pantothenate + AMP + diphosphate + H(+). Its pathway is cofactor biosynthesis; (R)-pantothenate biosynthesis; (R)-pantothenate from (R)-pantoate and beta-alanine: step 1/1. In terms of biological role, catalyzes the condensation of pantoate with beta-alanine in an ATP-dependent reaction via a pantoyl-adenylate intermediate. The chain is Pantothenate synthetase from Bacillus velezensis (strain DSM 23117 / BGSC 10A6 / LMG 26770 / FZB42) (Bacillus amyloliquefaciens subsp. plantarum).